Consider the following 452-residue polypeptide: Chromosomal replication initiator protein DnaA (452 aa).

The tract at residues 1 to 73 is domain I, interacts with DnaA modulators; the sequence is MSPNSTLWQT…NELATKYSST (73 aa). The tract at residues 73–102 is domain II; the sequence is TPVRLKFVSQEEVIEEPVADRKLTIDYRQG. The tract at residues 103–323 is domain III, AAA+ region; that stretch reads NLNSTYTFDS…GALIRLISYA (221 aa). Positions 147, 149, 150, and 151 each coordinate ATP. The tract at residues 324 to 452 is domain IV, binds dsDNA; that stretch reads QTFNLEITMN…VKKIDSPLLK (129 aa).

It belongs to the DnaA family. In terms of assembly, oligomerizes as a right-handed, spiral filament on DNA at oriC.

The protein localises to the cytoplasm. Functionally, plays an essential role in the initiation and regulation of chromosomal replication. ATP-DnaA binds to the origin of replication (oriC) to initiate formation of the DNA replication initiation complex once per cell cycle. Binds the DnaA box (a 9 base pair repeat at the origin) and separates the double-stranded (ds)DNA. Forms a right-handed helical filament on oriC DNA; dsDNA binds to the exterior of the filament while single-stranded (ss)DNA is stabiized in the filament's interior. The ATP-DnaA-oriC complex binds and stabilizes one strand of the AT-rich DNA unwinding element (DUE), permitting loading of DNA polymerase. After initiation quickly degrades to an ADP-DnaA complex that is not apt for DNA replication. Binds acidic phospholipids. The sequence is that of Chromosomal replication initiator protein DnaA from Acholeplasma laidlawii (strain PG-8A).